A 367-amino-acid chain; its full sequence is MSSPPPARSGFYRQEVTKTAWEVRAVYRDLQPVGSGAYGAVCSAVDGRTGAKVAIKKLYRPFQSELFAKRAYRELRLLKHMRHENVIGLLDVFTPDETLDDFTDFYLVMPFMGTDLGKLMKHEKLGEDRIQFLVYQMLKGLRYIHAAGIIHRDLKPGNLAVNEDCELKILDFGLARQADSEMTGYVVTRWYRAPEVILNWMRYTQTVDIWSVGCIMAEMITGKTLFKGSDHLDQLKEIMKVTGTPPAEFVQRLQSDEAKNYMKGLPELEKKDFASILTNASPLAVNLLEKMLVLDAEQRVTAGEALAHPYFESLHDTEDEPQVQKYDDSFDDVDRTLDEWKRVTYKEVLSFKPPRQLGARVSKETPL.

Positions 27-311 constitute a Protein kinase domain; it reads YRDLQPVGSG…AGEALAHPYF (285 aa). ATP-binding positions include 33–41 and K56; that span reads VGSGAYGAV. D153 functions as the Proton acceptor in the catalytic mechanism. Residue T183 is modified to Phosphothreonine; by MAP2K3 and MAP2K6. The TXY signature appears at 183–185; sequence TGY. Y185 carries the post-translational modification Phosphotyrosine.

It belongs to the protein kinase superfamily. CMGC Ser/Thr protein kinase family. MAP kinase subfamily. In terms of assembly, monomer. Interacts with the PDZ domain of the syntrophin SNTA1. Interacts with SH3BP5. Interacts with LIN7C, SCRIB and SYNJ2BP. Interacts with PTPN4; this interaction induces the activation of PTPN4 phosphatase activity. Mg(2+) is required as a cofactor. In terms of processing, dually phosphorylated on Thr-183 and Tyr-185 by MAP2K3/MKK3 and MAP2K6/MKK6, which activates the enzyme. Post-translationally, ubiquitinated. Ubiquitination leads to degradation by the proteasome pathway. In terms of tissue distribution, highly expressed in skeletal muscle and heart.

It is found in the cytoplasm. The protein resides in the nucleus. Its subcellular location is the mitochondrion. The catalysed reaction is L-seryl-[protein] + ATP = O-phospho-L-seryl-[protein] + ADP + H(+). The enzyme catalyses L-threonyl-[protein] + ATP = O-phospho-L-threonyl-[protein] + ADP + H(+). Its activity is regulated as follows. Activated by phosphorylation on threonine and tyrosine. MAP2K3/MKK3 and MAP2K6/MKK6 are both essential for the activation of MAPK12 induced by environmental stress, whereas MAP2K6/MKK6 is the major MAPK12 activator in response to TNF-alpha. Its function is as follows. Serine/threonine kinase which acts as an essential component of the MAP kinase signal transduction pathway. MAPK12 is one of the four p38 MAPKs which play an important role in the cascades of cellular responses evoked by extracellular stimuli such as pro-inflammatory cytokines or physical stress leading to direct activation of transcription factors such as ELK1 and ATF2. Accordingly, p38 MAPKs phosphorylate a broad range of proteins and it has been estimated that they may have approximately 200 to 300 substrates each. Some of the targets are downstream kinases such as MAPKAPK2, which are activated through phosphorylation and further phosphorylate additional targets. Plays a role in myoblast differentiation and also in the down-regulation of cyclin D1 in response to hypoxia in adrenal cells suggesting MAPK12 may inhibit cell proliferation while promoting differentiation. Phosphorylates DLG1. Following osmotic shock, MAPK12 in the cell nucleus increases its association with nuclear DLG1, thereby causing dissociation of DLG1-SFPQ complexes. This function is independent of its catalytic activity and could affect mRNA processing and/or gene transcription to aid cell adaptation to osmolarity changes in the environment. Regulates UV-induced checkpoint signaling and repair of UV-induced DNA damage and G2 arrest after gamma-radiation exposure. MAPK12 is involved in the regulation of SLC2A1 expression and basal glucose uptake in L6 myotubes; and negatively regulates SLC2A4 expression and contraction-mediated glucose uptake in adult skeletal muscle. C-Jun (JUN) phosphorylation is stimulated by MAPK14 and inhibited by MAPK12, leading to a distinct AP-1 regulation. MAPK12 is required for the normal kinetochore localization of PLK1, prevents chromosomal instability and supports mitotic cell viability. MAPK12-signaling is also positively regulating the expansion of transient amplifying myogenic precursor cells during muscle growth and regeneration. This is Mitogen-activated protein kinase 12 (MAPK12) from Homo sapiens (Human).